Consider the following 955-residue polypeptide: Isoleucine--tRNA ligase (955 aa).

The short motif at 60–70 is the 'HIGH' region element; it reads PYANGDLHIGH. E563 is a binding site for L-isoleucyl-5'-AMP. The 'KMSKS' region motif lies at 604–608; sequence KMSKS. K607 is a binding site for ATP. Residues C926, C929, C946, and C949 each contribute to the Zn(2+) site.

The protein belongs to the class-I aminoacyl-tRNA synthetase family. IleS type 1 subfamily. Monomer. The cofactor is Zn(2+).

The protein resides in the cytoplasm. The enzyme catalyses tRNA(Ile) + L-isoleucine + ATP = L-isoleucyl-tRNA(Ile) + AMP + diphosphate. Its function is as follows. Catalyzes the attachment of isoleucine to tRNA(Ile). As IleRS can inadvertently accommodate and process structurally similar amino acids such as valine, to avoid such errors it has two additional distinct tRNA(Ile)-dependent editing activities. One activity is designated as 'pretransfer' editing and involves the hydrolysis of activated Val-AMP. The other activity is designated 'posttransfer' editing and involves deacylation of mischarged Val-tRNA(Ile). This Cyanothece sp. (strain PCC 7425 / ATCC 29141) protein is Isoleucine--tRNA ligase.